The following is a 252-amino-acid chain: Small ribosomal subunit protein uS3 (252 aa).

The KH type-2 domain occupies 39-110; the sequence is IRKALMKELK…EVKINVVEIK (72 aa). A disordered region spans residues 218–252; the sequence is TSDEKPKFEKRDFNRSNNNRRDQAPKSHPVAKEAK. Positions 219-252 are enriched in basic and acidic residues; it reads SDEKPKFEKRDFNRSNNNRRDQAPKSHPVAKEAK.

This sequence belongs to the universal ribosomal protein uS3 family. As to quaternary structure, part of the 30S ribosomal subunit. Forms a tight complex with proteins S10 and S14.

Functionally, binds the lower part of the 30S subunit head. Binds mRNA in the 70S ribosome, positioning it for translation. This is Small ribosomal subunit protein uS3 from Spiroplasma citri.